Here is a 552-residue protein sequence, read N- to C-terminus: Cleavage and polyadenylation specificity factor subunit 6 (552 aa).

Residues 1–213 (MADGVDHIDI…RGRFPGAVPG (213 aa)) are necessary for interaction with NXF1. An RRM domain is found at 81–161 (IALYIGNLTR…QNPVVTPCNK (81 aa)). The necessary for interaction with NUDT21/CPSF5 stretch occupies residues 81–161 (IALYIGNLTR…QNPVVTPCNK (81 aa)). The interval 81–161 (IALYIGNLTR…QNPVVTPCNK (81 aa)) is necessary for nuclear paraspeckles localization. Residue Thr157 is modified to Phosphothreonine. The segment covering 169–180 (MQSRKTTQSGQM) has biased composition (polar residues). 2 disordered regions span residues 169 to 411 (MQSR…PLSE) and 479 to 552 (GIES…YRHR). A GAR motif is present at residues 202 to 206 (RGRGR). Residues 207-219 (FPGAVPGGDRFPG) are compositionally biased toward low complexity. 3 stretches are compositionally biased toward pro residues: residues 220 to 265 (PTGP…PLAG), 285 to 366 (GQPP…PPPT), and 377 to 388 (GPPPTDPYGRPP). A compositionally biased stretch (basic and acidic residues) spans 389-404 (PYDRGDYGPPGREMDT). Phosphothreonine occurs at positions 404 and 407. A sufficient for nuclear speckle localization region spans residues 404 to 552 (TARTPLSEAE…RDREREYRHR (149 aa)). Residues 405–552 (ARTPLSEAEF…RDREREYRHR (148 aa)) are necessary for RNA-binding. The interval 481-552 (ESKSYGSGSR…RDREREYRHR (72 aa)) is necessary for interaction with SRSF3, SRSF7 and TRA2B/SFRS10. The segment at 491–552 (RRERSRERDH…RDREREYRHR (62 aa)) is arg/Ser-rich domain. Positions 494 to 504 (RSRERDHSRSR) are enriched in basic and acidic residues. Ser495, Ser501, Ser512, Ser514, and Ser526 each carry phosphoserine. Positions 505-515 (EKSRRHKSRSR) are enriched in basic residues. The sufficient for nuclear targeting stretch occupies residues 511–552 (KSRSRDRHDDYYRERSRERERHRDRDRDRDRERDREREYRHR). Over residues 516–552 (DRHDDYYRERSRERERHRDRDRDRDRERDREREYRHR) the composition is skewed to basic and acidic residues.

The protein belongs to the RRM CPSF6/7 family. As to quaternary structure, component of the cleavage factor Im (CFIm) complex which is a heterotetramer composed of two subunits of NUDT21/CPSF5 and two subunits of CPSF6 or CPSF7 or a heterodimer of CPSF6 and CPSF7. The cleavage factor Im (CFIm) complex associates with the CPSF and CSTF complexes to promote the assembly of the core mRNA 3'-processing machinery. Associates with the exon junction complex (EJC). Associates with the 80S ribosome particle. Interacts (via the RRM domain) with NUDT21/CPSF5; this interaction is direct and enhances binding to RNA. Interacts (via Arg/Ser-rich domain) with FIP1L1 (preferentially via unphosphorylated form and Arg/Glu/Asp-rich domain); this interaction mediates, at least in part, the interaction between the CFIm and CPSF complexes and may be inhibited by CPSF6 hyper-phosphorylation. Interacts (via N-terminus) with NXF1; this interaction is direct. Interacts with SRSF3. Interacts with SRSF7. Interacts with SNRNP70. Interacts with TRA2B/SFRS10. Interacts with UPF1. Interacts with UPF3B. Interacts with VIRMA. Interacts (via Arg/Ser-rich domain) with TNPO3; promoting nuclear import of CPSF6 independently of its phosphorylation status. Interacts with YTHDC1. Post-translationally, phosphorylated. Phosphorylated in the Arg/Ser-rich domain by SRPK1, in vitro. In terms of processing, symmetrically dimethylated on arginine residues in the GAR motif by PRMT5 in a WDR77- and CLNS1A-dependent manner. Asymmetrically dimethylated on arginine residues in the GAR motif by PRMT1.

It localises to the nucleus. Its subcellular location is the nucleoplasm. The protein resides in the nucleus speckle. The protein localises to the cytoplasm. Component of the cleavage factor Im (CFIm) complex that functions as an activator of the pre-mRNA 3'-end cleavage and polyadenylation processing required for the maturation of pre-mRNA into functional mRNAs. CFIm contributes to the recruitment of multiprotein complexes on specific sequences on the pre-mRNA 3'-end, so called cleavage and polyadenylation signals (pA signals). Most pre-mRNAs contain multiple pA signals, resulting in alternative cleavage and polyadenylation (APA) producing mRNAs with variable 3'-end formation. The CFIm complex acts as a key regulator of cleavage and polyadenylation site choice during APA through its binding to 5'-UGUA-3' elements localized in the 3'-untranslated region (UTR) for a huge number of pre-mRNAs. CPSF6 enhances NUDT21/CPSF5 binding to 5'-UGUA-3' elements localized upstream of pA signals and promotes RNA looping, and hence activates directly the mRNA 3'-processing machinery. Plays a role in mRNA export. This is Cleavage and polyadenylation specificity factor subunit 6 from Pongo abelii (Sumatran orangutan).